We begin with the raw amino-acid sequence, 443 residues long: Probable nitrate/nitrite antiporter NarK1 (443 aa).

A run of 12 helical transmembrane segments spans residues 23–43, 56–76, 79–99, 108–128, 142–164, 182–202, 230–250, 255–275, 298–318, 329–349, 368–388, and 401–421; these read TLAFTLMFAAWLMFGVLGVPI, WISALAILNGSLWRLLAGILA, YGGRLVFTLMLFFTAIPAYLV, LLLYAFLVGFAGNSFSVGIAW, LGVFGAGNVGASVTKFIGPALIA, FIPFLYAVLLVLMGFVLWFGT, FSLYYVVVFGAYVALSAWLPK, VFGLPLHEAALLTALFIFPAS, FGIILLASGVLMMPEGHIVLY, FTMGVELFTLLVFLIGVGMGI, AVGGLVGMLGALGGFFLPPLF, and TFFVLFLLAAISFLWMHLTVL.

The protein belongs to the major facilitator superfamily. Nitrate/nitrite porter (TC 2.A.1.8) family.

The protein resides in the cell membrane. It catalyses the reaction nitrate(in) + nitrite(out) = nitrate(out) + nitrite(in). Functionally, probable nitrate/nitrite antiporter that may be involved in nitrate import and nitrite export during anaerobic growth. The polypeptide is Probable nitrate/nitrite antiporter NarK1 (Thermus thermophilus).